An 88-amino-acid polypeptide reads, in one-letter code: uncharacterized protein (88 aa).

Residues 34 to 54 (IIIAVILIFFLTIVGLFYLII) form a helical membrane-spanning segment.

The protein localises to the membrane. This is an uncharacterized protein from Ureaplasma parvum serovar 3 (strain ATCC 700970).